A 162-amino-acid chain; its full sequence is uncharacterized protein (162 aa).

The next 4 membrane-spanning stretches (helical) occupy residues 15 to 35 (VLAI…APAL), 43 to 63 (VCHF…FDLS), 70 to 90 (LTIL…QSFL), and 97 to 117 (LFDI…NILY).

The protein localises to the membrane. This is an uncharacterized protein from Schizosaccharomyces pombe (strain 972 / ATCC 24843) (Fission yeast).